Consider the following 428-residue polypeptide: Phosphomethylpyrimidine synthase 1 (428 aa).

Residues Asn65, Met94, Tyr123, His158, 180–182 (SRG), 221–224 (DGMR), and Glu260 each bind substrate. His264 serves as a coordination point for Zn(2+). Tyr287 serves as a coordination point for substrate. His328 provides a ligand contact to Zn(2+). Residues Cys405, Cys408, and Cys412 each contribute to the [4Fe-4S] cluster site.

It belongs to the ThiC family. [4Fe-4S] cluster serves as cofactor.

The enzyme catalyses 5-amino-1-(5-phospho-beta-D-ribosyl)imidazole + S-adenosyl-L-methionine = 4-amino-2-methyl-5-(phosphooxymethyl)pyrimidine + CO + 5'-deoxyadenosine + formate + L-methionine + 3 H(+). It functions in the pathway cofactor biosynthesis; thiamine diphosphate biosynthesis. Catalyzes the synthesis of the hydroxymethylpyrimidine phosphate (HMP-P) moiety of thiamine from aminoimidazole ribotide (AIR) in a radical S-adenosyl-L-methionine (SAM)-dependent reaction. The chain is Phosphomethylpyrimidine synthase 1 from Methanosarcina mazei (strain ATCC BAA-159 / DSM 3647 / Goe1 / Go1 / JCM 11833 / OCM 88) (Methanosarcina frisia).